The primary structure comprises 332 residues: Probable farnesyl diphosphate synthase (332 aa).

Positions 75, 78, and 107 each coordinate isopentenyl diphosphate. Positions 114 and 120 each coordinate Mg(2+). Position 125 (Arg-125) interacts with (2E)-geranyl diphosphate. Arg-126 provides a ligand contact to isopentenyl diphosphate. Positions 208, 209, 250, and 267 each coordinate (2E)-geranyl diphosphate.

The protein belongs to the FPP/GGPP synthase family. The cofactor is Mg(2+).

Its subcellular location is the cytoplasm. The enzyme catalyses isopentenyl diphosphate + (2E)-geranyl diphosphate = (2E,6E)-farnesyl diphosphate + diphosphate. The sequence is that of Probable farnesyl diphosphate synthase (fppS) from Bradyrhizobium diazoefficiens (strain JCM 10833 / BCRC 13528 / IAM 13628 / NBRC 14792 / USDA 110).